We begin with the raw amino-acid sequence, 901 residues long: HTH-type transcriptional regulator MalT (901 aa).

Residue 39–46 participates in ATP binding; it reads SPAGYGKT. The 66-residue stretch at 829–894 folds into the HTH luxR-type domain; that stretch reads ELIRTSPLTQ…AAVQHAQKLL (66 aa). The segment at residues 853–872 is a DNA-binding region (H-T-H motif); the sequence is NEQIAGELEVAATTIKTHIR.

It belongs to the MalT family. In terms of assembly, monomer in solution. Oligomerizes to an active state in the presence of the positive effectors ATP and maltotriose.

Activated by ATP and maltotriose, which are both required for DNA binding. Functionally, positively regulates the transcription of the maltose regulon whose gene products are responsible for uptake and catabolism of malto-oligosaccharides. Specifically binds to the promoter region of its target genes, recognizing a short DNA motif called the MalT box. The polypeptide is HTH-type transcriptional regulator MalT (Escherichia coli O7:K1 (strain IAI39 / ExPEC)).